The following is a 202-amino-acid chain: Na(+)-translocating NADH-quinone reductase subunit E (202 aa).

The next 6 membrane-spanning stretches (helical) occupy residues 4-24, 35-55, 81-101, 114-134, 144-164, and 180-200; these read LAGLFITAVFVENLALTFFLG, IEVAFGMGIAVIVVQTLTVPI, FLGLVSYLGVIAAIVQILEMF, GIYLPLIAVNCAILGGSLFMV, LVYGLGSGFGWALAIVALAGV, and LGITFISAGLMAMGFMAFSGI.

Belongs to the NqrDE/RnfAE family. As to quaternary structure, composed of six subunits; NqrA, NqrB, NqrC, NqrD, NqrE and NqrF.

The protein resides in the cell inner membrane. The catalysed reaction is a ubiquinone + n Na(+)(in) + NADH + H(+) = a ubiquinol + n Na(+)(out) + NAD(+). Functionally, NQR complex catalyzes the reduction of ubiquinone-1 to ubiquinol by two successive reactions, coupled with the transport of Na(+) ions from the cytoplasm to the periplasm. NqrA to NqrE are probably involved in the second step, the conversion of ubisemiquinone to ubiquinol. The polypeptide is Na(+)-translocating NADH-quinone reductase subunit E (Nitrosomonas europaea (strain ATCC 19718 / CIP 103999 / KCTC 2705 / NBRC 14298)).